We begin with the raw amino-acid sequence, 184 residues long: Small ribosomal subunit protein eS8 (184 aa).

Residues 1-23 (MGISRDSRHKRRLTGGRYPVHKK) are disordered. A compositionally biased stretch (basic residues) spans 7 to 23 (SRHKRRLTGGRYPVHKK).

Belongs to the eukaryotic ribosomal protein eS8 family.

The polypeptide is Small ribosomal subunit protein eS8 (RPS8) (Theileria annulata).